The sequence spans 300 residues: Epimerase family protein SAB0724c (300 aa).

This sequence belongs to the NAD(P)-dependent epimerase/dehydratase family. SDR39U1 subfamily.

This chain is Epimerase family protein SAB0724c, found in Staphylococcus aureus (strain bovine RF122 / ET3-1).